Here is a 333-residue protein sequence, read N- to C-terminus: 4-hydroxy-3-methylbut-2-enyl diphosphate reductase (333 aa).

A [4Fe-4S] cluster-binding site is contributed by C20. (2E)-4-hydroxy-3-methylbut-2-enyl diphosphate contacts are provided by H49 and H85. Positions 49 and 85 each coordinate dimethylallyl diphosphate. Isopentenyl diphosphate contacts are provided by H49 and H85. C107 lines the [4Fe-4S] cluster pocket. H135 is a binding site for (2E)-4-hydroxy-3-methylbut-2-enyl diphosphate. H135 provides a ligand contact to dimethylallyl diphosphate. H135 lines the isopentenyl diphosphate pocket. E137 serves as the catalytic Proton donor. T176 lines the (2E)-4-hydroxy-3-methylbut-2-enyl diphosphate pocket. C206 serves as a coordination point for [4Fe-4S] cluster. 4 residues coordinate (2E)-4-hydroxy-3-methylbut-2-enyl diphosphate: S234, S235, N236, and S279. S234, S235, N236, and S279 together coordinate dimethylallyl diphosphate. The isopentenyl diphosphate site is built by S234, S235, N236, and S279.

This sequence belongs to the IspH family. The cofactor is [4Fe-4S] cluster.

It carries out the reaction isopentenyl diphosphate + 2 oxidized [2Fe-2S]-[ferredoxin] + H2O = (2E)-4-hydroxy-3-methylbut-2-enyl diphosphate + 2 reduced [2Fe-2S]-[ferredoxin] + 2 H(+). The catalysed reaction is dimethylallyl diphosphate + 2 oxidized [2Fe-2S]-[ferredoxin] + H2O = (2E)-4-hydroxy-3-methylbut-2-enyl diphosphate + 2 reduced [2Fe-2S]-[ferredoxin] + 2 H(+). Its pathway is isoprenoid biosynthesis; dimethylallyl diphosphate biosynthesis; dimethylallyl diphosphate from (2E)-4-hydroxy-3-methylbutenyl diphosphate: step 1/1. It participates in isoprenoid biosynthesis; isopentenyl diphosphate biosynthesis via DXP pathway; isopentenyl diphosphate from 1-deoxy-D-xylulose 5-phosphate: step 6/6. Functionally, catalyzes the conversion of 1-hydroxy-2-methyl-2-(E)-butenyl 4-diphosphate (HMBPP) into a mixture of isopentenyl diphosphate (IPP) and dimethylallyl diphosphate (DMAPP). Acts in the terminal step of the DOXP/MEP pathway for isoprenoid precursor biosynthesis. In Rhizobium leguminosarum bv. trifolii (strain WSM2304), this protein is 4-hydroxy-3-methylbut-2-enyl diphosphate reductase.